The sequence spans 174 residues: N-terminal acetyltransferase B complex catalytic subunit NAA20 (174 aa).

The N-acetyltransferase domain occupies 2–151 (TTIRRFSCND…DGLDMRKALS (150 aa)).

This sequence belongs to the acetyltransferase family. ARD1 subfamily.

It carries out the reaction N-terminal L-methionyl-L-asparaginyl-[protein] + acetyl-CoA = N-terminal N(alpha)-acetyl-L-methionyl-L-asparaginyl-[protein] + CoA + H(+). The catalysed reaction is N-terminal L-methionyl-L-glutaminyl-[protein] + acetyl-CoA = N-terminal N(alpha)-acetyl-L-methionyl-L-glutaminyl-[protein] + CoA + H(+). The enzyme catalyses N-terminal L-methionyl-L-aspartyl-[protein] + acetyl-CoA = N-terminal N(alpha)-acetyl-L-methionyl-L-aspartyl-[protein] + CoA + H(+). It catalyses the reaction N-terminal L-methionyl-L-glutamyl-[protein] + acetyl-CoA = N-terminal N(alpha)-acetyl-L-methionyl-L-glutamyl-[protein] + CoA + H(+). Catalytic subunit of the NatB N-alpha-acetyltransferase complex. Involved in plant immunity through the regulation of SNC1 stability. This chain is N-terminal acetyltransferase B complex catalytic subunit NAA20, found in Arabidopsis thaliana (Mouse-ear cress).